The following is a 219-amino-acid chain: Nodulation protein NolA (219 aa).

The region spanning 10–79 (RWRIGELAEA…LHEIRKAMEG (70 aa)) is the HTH merR-type domain. Positions 13 to 32 (IGELAEATGVTVRTLHHYEH) form a DNA-binding region, H-T-H motif.

Involved in genotype-specific nodulation of soybeans. This chain is Nodulation protein NolA (nolA), found in Bradyrhizobium elkanii.